A 580-amino-acid polypeptide reads, in one-letter code: Glyco-Gag protein (580 aa).

Topologically, residues 1–51 are cytoplasmic; that stretch reads MSGASSGTAIGAHLFGVSPEYRVLIGDGGAGPSKSLSEVSFSVWYRSRAAR. The helical transmembrane segment at 52 to 72 threads the bilayer; that stretch reads LVILCLVASFLVPCLTFLIAE. Over 73–580 the chain is Extracellular; the sequence is AVMGQTVTTP…ANSTLLNLED (508 aa). N-linked (GlcNAc...) asparagine; by host glycosylation occurs at Asn134. Disordered regions lie at residues 171–282, 491–514, and 560–580; these read VRPF…NRPQ, ETPEEREERLWQRQEERDKKRHKE, and RDCPKRPRKKPANSTLLNLED. Residues 174–193 show a composition bias toward pro residues; that stretch reads FLPPPKPPTPLPQPLSPQPS. The segment covering 194-203 has biased composition (low complexity); the sequence is APLTSSLYPV. Pro residues-rich tracts occupy residues 204-220 and 230-245; these read VPKPDPPKPPVLPPDPS and EPPPYPGGHGPPPSGP. The span at 491 to 508 shows a compositional bias: basic and acidic residues; it reads ETPEEREERLWQRQEERD. The span at 571–580 shows a compositional bias: polar residues; that stretch reads ANSTLLNLED. A glycan (N-linked (GlcNAc...) asparagine; by host) is linked at Asn572.

Glycosylated by host. In terms of processing, cleaved by host near the middle of the molecule, releasing the c-terminal half containing capsid and nucleoprotein domains op GAG.

Its subcellular location is the host cell membrane. Its function is as follows. Plays a role in viral particle release. Presumably acts by facilitating the fission of the virion bud at the cell surface. This chain is Glyco-Gag protein, found in Feline leukemia virus.